A 1019-amino-acid polypeptide reads, in one-letter code: Phosphatidylinositol 3,4,5-trisphosphate 5-phosphatase 1 (1019 aa).

The 97-residue stretch at 5-101 (WYHGNITRSK…GLVTHLQYPI (97 aa)) folds into the SH2 domain. A compositionally biased stretch (acidic residues) spans 103-116 (KEEEGPEEPDEEQE). 2 disordered regions span residues 103-133 (KEEE…TPPS) and 909-1019 (ETQN…PPTA). The SH3-binding 1 motif lies at 120-125 (PNVPPR). Polar residues-rich tracts occupy residues 909–931 (ETQN…KQSP) and 958–980 (PITS…TNRT). The short motif at 966-971 (TLSTQK) is the SH3-binding 2 element. An NPXY motif motif is present at residues 1004 to 1007 (NPLY). Tyr-1007 carries the post-translational modification Phosphotyrosine. Over residues 1010-1019 (VNNTLYPPTA) the composition is skewed to polar residues.

It belongs to the inositol 1,4,5-trisphosphate 5-phosphatase family. Post-translationally, tyrosine phosphorylated by the members of the SRC family after exposure to a diverse array of extracellular stimuli.

It localises to the cytoplasm. It is found in the cell membrane. The protein localises to the membrane raft. Its subcellular location is the cytoskeleton. The catalysed reaction is a 1,2-diacyl-sn-glycero-3-phospho-(1D-myo-inositol-3,4,5-trisphosphate) + H2O = a 1,2-diacyl-sn-glycero-3-phospho-(1D-myo-inositol-3,4-bisphosphate) + phosphate. It catalyses the reaction 1D-myo-inositol 1,3,4,5-tetrakisphosphate + H2O = 1D-myo-inositol 1,3,4-trisphosphate + phosphate. It carries out the reaction a 1,2-diacyl-sn-glycero-3-phospho-(1D-myo-inositol-4,5-bisphosphate) + H2O = a 1,2-diacyl-sn-glycero-3-phospho-(1D-myo-inositol 4-phosphate) + phosphate. Functionally, phosphatidylinositol (PtdIns) phosphatase that specifically hydrolyzes the 5-phosphate of phosphatidylinositol-3,4,5-trisphosphate (PtdIns(3,4,5)P3) to produce PtdIns(3,4)P2, thereby negatively regulating the PI3K (phosphoinositide 3-kinase) pathways. Able also to hydrolyzes the 5-phosphate of phosphatidylinositol-4,5-bisphosphate (PtdIns(4,5)P3) and inositol 1,3,4,5-tetrakisphosphate. Acts as a negative regulator of B-cell antigen receptor signaling. Mediates signaling from the FC-gamma-RIIB receptor (FCGR2B), playing a central role in terminating signal transduction from activating immune/hematopoietic cell receptor systems. Acts as a negative regulator of myeloid cell proliferation/survival and chemotaxis, mast cell degranulation, immune cells homeostasis, integrin alpha-IIb/beta-3 signaling in platelets and JNK signaling in B-cells. This is Phosphatidylinositol 3,4,5-trisphosphate 5-phosphatase 1 (inpp5d) from Xenopus laevis (African clawed frog).